We begin with the raw amino-acid sequence, 145 residues long: Maximins 5/H4 type 2 (145 aa).

The first 18 residues, 1-18 (MNFKYIVAVSFLIASAYA), serve as a signal peptide directing secretion. 2 propeptides span residues 19-43 (RSVQ…REIR) and 74-124 (TAEE…KEKR). Leucine amide is present on Leu-144.

The protein belongs to the bombinin family. As to expression, expressed by the skin glands.

It is found in the secreted. In terms of biological role, maximin-5 shows antibacterial activity against both Gram-positive and Gram-negative bacteria. The only exception is the resistance of E.coli. Also shows antimicrobial activity against fungi C.albicans, A.flavus and P.uticale. It has little hemolytic activity. It does not possess a significant cytotoxicity against tumor cell lines. It does not possess a significant anti-HIV activity. Maximin-H4 shows antibacterial activity against both Gram-positive and Gram-negative bacteria. It also shows antimicrobial activity against the fungus C.albicans. Shows strong hemolytic activity. This is Maximins 5/H4 type 2 from Bombina maxima (Giant fire-bellied toad).